A 232-amino-acid polypeptide reads, in one-letter code: Response regulator MprA (232 aa).

Positions 4–118 (RILVVDDDRA…ELLARMRALL (115 aa)) constitute a Response regulatory domain. Asp-48 carries the 4-aspartylphosphate modification. Positions 131–229 (SVAMTFSDLS…VRGVGYVLRE (99 aa)) form a DNA-binding region, ompR/PhoB-type.

In terms of processing, phosphorylated and dephosphorylated by MprB.

Its subcellular location is the cytoplasm. Member of the two-component regulatory system MprB/MprA which contributes to maintaining a balance among several systems involved in stress resistance and is required for establishment and maintenance of persistent infection in the host. Functions as a transcriptional regulator that recognizes a 19-bp nucleotide motif comprizing two loosely conserved 8-bp direct DNA-binding motif repeats separated by a 3-bp spacer region. The sequence is that of Response regulator MprA (mprA) from Mycobacterium ulcerans (strain Agy99).